We begin with the raw amino-acid sequence, 173 residues long: Photosystem I reaction center subunit XI (173 aa).

2 helical membrane passes run 92 to 112 and 148 to 168; these read LAGL…LSLY and LIGG…LGII.

It belongs to the PsaL family.

It localises to the cellular thylakoid membrane. In Nostoc punctiforme (strain ATCC 29133 / PCC 73102), this protein is Photosystem I reaction center subunit XI.